We begin with the raw amino-acid sequence, 692 residues long: E3 ubiquitin-protein ligase brl1 (692 aa).

Residues 302–370 (SNEEKIESIN…RNERDSLVAK (69 aa)) are a coiled coil. The RING-type zinc finger occupies 639 to 679 (CSVCNFSNWKSKLIPNCGHAFCSNCMEPFYEHKTSTCPQCE).

Belongs to the BRE1 family. In terms of assembly, component of the histone H2B ubiquitin ligase complex (HULC) composed of at least brl1, brl2, rhp6 and shf1.

It localises to the nucleus. It catalyses the reaction S-ubiquitinyl-[E2 ubiquitin-conjugating enzyme]-L-cysteine + [acceptor protein]-L-lysine = [E2 ubiquitin-conjugating enzyme]-L-cysteine + N(6)-ubiquitinyl-[acceptor protein]-L-lysine.. It functions in the pathway protein modification; protein ubiquitination. In terms of biological role, E3 ubiquitin-protein ligase which belongs to the histone H2B ubiquitin ligase complex (HULC) which mediates monoubiquitination of histone H2B to form H2BK123ub1. H2BK123ub1 gives a specific tag for epigenetic transcriptional activation and is also a prerequisite for H3K4me and H3K79me formation. The polypeptide is E3 ubiquitin-protein ligase brl1 (brl1) (Schizosaccharomyces pombe (strain 972 / ATCC 24843) (Fission yeast)).